The following is a 478-amino-acid chain: Adenosylhomocysteinase (478 aa).

Substrate contacts are provided by Thr-67, Asp-144, and Glu-204. Position 205-207 (205-207 (TTT)) interacts with NAD(+). Residues Lys-234 and Asp-238 each contribute to the substrate site. NAD(+) is bound by residues Asn-239, 268–273 (GYGDVG), Glu-291, Asn-326, 347–349 (IGH), and Asn-392.

It belongs to the adenosylhomocysteinase family. NAD(+) is required as a cofactor.

It is found in the cytoplasm. It carries out the reaction S-adenosyl-L-homocysteine + H2O = L-homocysteine + adenosine. It participates in amino-acid biosynthesis; L-homocysteine biosynthesis; L-homocysteine from S-adenosyl-L-homocysteine: step 1/1. May play a key role in the regulation of the intracellular concentration of adenosylhomocysteine. This is Adenosylhomocysteinase from Nitrosomonas eutropha (strain DSM 101675 / C91 / Nm57).